Consider the following 449-residue polypeptide: UDP-N-acetylmuramoylalanine--D-glutamate ligase (449 aa).

Residue 118–124 (GSNGKTT) participates in ATP binding.

The protein belongs to the MurCDEF family.

Its subcellular location is the cytoplasm. The catalysed reaction is UDP-N-acetyl-alpha-D-muramoyl-L-alanine + D-glutamate + ATP = UDP-N-acetyl-alpha-D-muramoyl-L-alanyl-D-glutamate + ADP + phosphate + H(+). It participates in cell wall biogenesis; peptidoglycan biosynthesis. Cell wall formation. Catalyzes the addition of glutamate to the nucleotide precursor UDP-N-acetylmuramoyl-L-alanine (UMA). This is UDP-N-acetylmuramoylalanine--D-glutamate ligase from Oceanobacillus iheyensis (strain DSM 14371 / CIP 107618 / JCM 11309 / KCTC 3954 / HTE831).